A 431-amino-acid polypeptide reads, in one-letter code: Adenylosuccinate synthetase (431 aa).

Residues 13 to 19 (GDEGKGK) and 41 to 43 (GHT) each bind GTP. Asp-14 acts as the Proton acceptor in catalysis. Mg(2+) is bound by residues Asp-14 and Gly-41. Residues 14-17 (DEGK), 39-42 (NAGH), Thr-130, Arg-144, Gln-225, Thr-240, and Arg-306 each bind IMP. His-42 acts as the Proton donor in catalysis. 302–308 (ATTGRQR) contacts substrate. GTP is bound by residues Arg-308, 334-336 (KLD), and 416-418 (STG).

Belongs to the adenylosuccinate synthetase family. As to quaternary structure, homodimer. Mg(2+) is required as a cofactor.

Its subcellular location is the cytoplasm. It carries out the reaction IMP + L-aspartate + GTP = N(6)-(1,2-dicarboxyethyl)-AMP + GDP + phosphate + 2 H(+). It functions in the pathway purine metabolism; AMP biosynthesis via de novo pathway; AMP from IMP: step 1/2. Plays an important role in the de novo pathway of purine nucleotide biosynthesis. Catalyzes the first committed step in the biosynthesis of AMP from IMP. This chain is Adenylosuccinate synthetase, found in Halorhodospira halophila (strain DSM 244 / SL1) (Ectothiorhodospira halophila (strain DSM 244 / SL1)).